The sequence spans 358 residues: Uroporphyrinogen decarboxylase (358 aa).

Substrate is bound by residues 27–31 (RQAGR), aspartate 77, tyrosine 154, serine 209, and histidine 330.

It belongs to the uroporphyrinogen decarboxylase family. As to quaternary structure, homodimer.

The protein localises to the cytoplasm. It catalyses the reaction uroporphyrinogen III + 4 H(+) = coproporphyrinogen III + 4 CO2. The protein operates within porphyrin-containing compound metabolism; protoporphyrin-IX biosynthesis; coproporphyrinogen-III from 5-aminolevulinate: step 4/4. Functionally, catalyzes the decarboxylation of four acetate groups of uroporphyrinogen-III to yield coproporphyrinogen-III. The chain is Uroporphyrinogen decarboxylase from Acinetobacter baylyi (strain ATCC 33305 / BD413 / ADP1).